The sequence spans 278 residues: Splicing factor YJU2 (278 aa).

Zn(2+)-binding residues include Cys-51, Cys-54, Cys-88, and Cys-91. The interval 228-278 (HRQRTNKPGNNNDEKRTPLFNPTSTKGKIQKKSSVRTNPLGIVIKRGKSLK) is disordered. 2 short sequence motifs (nuclear localization signal) span residues 242–258 (KRTPLFNPTSTKGKIQK) and 260–278 (SSVRTNPLGIVIKRGKSLK).

It belongs to the CWC16 family. YJU2 subfamily. In terms of assembly, component of the spliceosome. Present in the activated B complex, the catalytically activated B* complex which catalyzes the branching, the catalytic step 1 C complex catalyzing the exon ligation, and the postcatalytic P complex containing the ligated exons (mRNA) and the excised lariat intron. Interacts (via C-terminus) with CLF1. Interacts (via N-terminus) with SYF1. Interacts with U2 snRNA; this interaction is direct. Identified in the CWC complex (or CEF1-associated complex), a spliceosome sub-complex reminiscent of a late-stage spliceosome composed of the U2, U5 and U6 snRNAs and at least BUD13, BUD31, BRR2, CDC40, CEF1, CLF1, CUS1, CWC2, CWC15, CWC21, CWC22, CWC23, CWC24, CWC25, CWC27, ECM2, HSH155, IST3, ISY1, LEA1, MSL1, NTC20, PRP8, PRP9, PRP11, PRP19, PRP21, PRP22, PRP45, PRP46, SLU7, SMB1, SMD1, SMD2, SMD3, SMX2, SMX3, SNT309, SNU114, SPP2, SYF1, SYF2, RSE1 and YJU2.

It is found in the nucleus. Part of the spliceosome which catalyzes two sequential transesterification reactions, first the excision of the non-coding intron from pre-mRNA and then the ligation of the coding exons to form the mature mRNA. Plays a role (via N-terminus) in stabilizing the structure of the spliceosome catalytic core and docking of the branch helix into the active site, producing 5'-exon and lariat intron-3'-intermediates. Further stabilizes spliceosome conformation for 3'-splice site docking (via C-terminus) promoting exon ligation. The protein is Splicing factor YJU2 of Saccharomyces cerevisiae (strain ATCC 204508 / S288c) (Baker's yeast).